Reading from the N-terminus, the 425-residue chain is Histidine--tRNA ligase (425 aa).

This sequence belongs to the class-II aminoacyl-tRNA synthetase family. In terms of assembly, homodimer.

The protein localises to the cytoplasm. The enzyme catalyses tRNA(His) + L-histidine + ATP = L-histidyl-tRNA(His) + AMP + diphosphate + H(+). The protein is Histidine--tRNA ligase of Histophilus somni (strain 2336) (Haemophilus somnus).